The following is a 210-amino-acid chain: Large ribosomal subunit protein uL3 (210 aa).

The interval 123-144 (KRHGQSRGPMAHGSRYHRRPGS) is disordered.

This sequence belongs to the universal ribosomal protein uL3 family. In terms of assembly, part of the 50S ribosomal subunit. Forms a cluster with proteins L14 and L19.

Its function is as follows. One of the primary rRNA binding proteins, it binds directly near the 3'-end of the 23S rRNA, where it nucleates assembly of the 50S subunit. This chain is Large ribosomal subunit protein uL3, found in Alkaliphilus metalliredigens (strain QYMF).